A 516-amino-acid polypeptide reads, in one-letter code: Chromosomal replication initiator protein DnaA (516 aa).

The interval 1–72 (MSLEHWNLCL…LLSEFAGDDL (72 aa)) is domain I, interacts with DnaA modulators. Positions 72-179 (LAPALKLAVK…QVEGGINHGA (108 aa)) are domain II. Positions 180-396 (NLNNSFTFDN…GALKRVIANS (217 aa)) are domain III, AAA+ region. Residues Gly224, Gly226, Lys227, and Thr228 each contribute to the ATP site. The segment at 397 to 516 (HFTGRAITPD…YKQLMRILTT (120 aa)) is domain IV, binds dsDNA.

The protein belongs to the DnaA family. Oligomerizes as a right-handed, spiral filament on DNA at oriC.

Its subcellular location is the cytoplasm. Its function is as follows. Plays an essential role in the initiation and regulation of chromosomal replication. ATP-DnaA binds to the origin of replication (oriC) to initiate formation of the DNA replication initiation complex once per cell cycle. Binds the DnaA box (a 9 base pair repeat at the origin) and separates the double-stranded (ds)DNA. Forms a right-handed helical filament on oriC DNA; dsDNA binds to the exterior of the filament while single-stranded (ss)DNA is stabiized in the filament's interior. The ATP-DnaA-oriC complex binds and stabilizes one strand of the AT-rich DNA unwinding element (DUE), permitting loading of DNA polymerase. After initiation quickly degrades to an ADP-DnaA complex that is not apt for DNA replication. Binds acidic phospholipids. The protein is Chromosomal replication initiator protein DnaA of Marinomonas sp. (strain MWYL1).